The chain runs to 218 residues: Octanoyltransferase (218 aa).

Residues 32–214 (ALTPDEIWLV…HFTQLLGYND (183 aa)) form the BPL/LPL catalytic domain. Substrate is bound by residues 71-78 (RGGQITYH), 143-145 (SLG), and 156-158 (GLA). Cysteine 174 serves as the catalytic Acyl-thioester intermediate.

The protein belongs to the LipB family.

It localises to the cytoplasm. The catalysed reaction is octanoyl-[ACP] + L-lysyl-[protein] = N(6)-octanoyl-L-lysyl-[protein] + holo-[ACP] + H(+). It participates in protein modification; protein lipoylation via endogenous pathway; protein N(6)-(lipoyl)lysine from octanoyl-[acyl-carrier-protein]: step 1/2. Catalyzes the transfer of endogenously produced octanoic acid from octanoyl-acyl-carrier-protein onto the lipoyl domains of lipoate-dependent enzymes. Lipoyl-ACP can also act as a substrate although octanoyl-ACP is likely to be the physiological substrate. In Histophilus somni (strain 129Pt) (Haemophilus somnus), this protein is Octanoyltransferase.